Reading from the N-terminus, the 756-residue chain is 5-methyltetrahydropteroyltriglutamate--homocysteine methyltransferase (756 aa).

Residues 20-23 (RELK) and Lys-114 each bind 5-methyltetrahydropteroyltri-L-glutamate. L-homocysteine-binding positions include 433–435 (IGS) and Glu-486. L-methionine is bound by residues 433 to 435 (IGS) and Glu-486. 5-methyltetrahydropteroyltri-L-glutamate is bound by residues 517–518 (RC) and Trp-563. L-homocysteine is bound at residue Asp-601. Asp-601 contributes to the L-methionine binding site. Glu-607 lines the 5-methyltetrahydropteroyltri-L-glutamate pocket. Positions 643, 645, and 667 each coordinate Zn(2+). Residue His-696 is the Proton donor of the active site. Zn(2+) is bound at residue Cys-728.

It belongs to the vitamin-B12 independent methionine synthase family. Requires Zn(2+) as cofactor.

It carries out the reaction 5-methyltetrahydropteroyltri-L-glutamate + L-homocysteine = tetrahydropteroyltri-L-glutamate + L-methionine. Its pathway is amino-acid biosynthesis; L-methionine biosynthesis via de novo pathway; L-methionine from L-homocysteine (MetE route): step 1/1. Functionally, catalyzes the transfer of a methyl group from 5-methyltetrahydrofolate to homocysteine resulting in methionine formation. The chain is 5-methyltetrahydropteroyltriglutamate--homocysteine methyltransferase from Mycolicibacterium paratuberculosis (strain ATCC BAA-968 / K-10) (Mycobacterium paratuberculosis).